The primary structure comprises 383 residues: Acetylornithine deacetylase (383 aa).

Histidine 80 lines the Zn(2+) pocket. Aspartate 82 is a catalytic residue. Position 112 (aspartate 112) interacts with Zn(2+). Residue glutamate 144 is part of the active site. 3 residues coordinate Zn(2+): glutamate 145, glutamate 169, and histidine 355.

The protein belongs to the peptidase M20A family. ArgE subfamily. In terms of assembly, homodimer. Zn(2+) is required as a cofactor. Co(2+) serves as cofactor. Requires glutathione as cofactor.

The protein localises to the cytoplasm. The catalysed reaction is N(2)-acetyl-L-ornithine + H2O = L-ornithine + acetate. It participates in amino-acid biosynthesis; L-arginine biosynthesis; L-ornithine from N(2)-acetyl-L-ornithine (linear): step 1/1. Functionally, catalyzes the hydrolysis of the amide bond of N(2)-acetylated L-amino acids. Cleaves the acetyl group from N-acetyl-L-ornithine to form L-ornithine, an intermediate in L-arginine biosynthesis pathway, and a branchpoint in the synthesis of polyamines. This is Acetylornithine deacetylase from Klebsiella pneumoniae (strain 342).